We begin with the raw amino-acid sequence, 718 residues long: Polyribonucleotide nucleotidyltransferase (718 aa).

Residues aspartate 493 and aspartate 499 each coordinate Mg(2+). The KH domain occupies 560 to 619 (PRMITIKINPEKIRDVIGKGGSVIRALTEETGTTIDISDDGVVTIASTSSEGMAEAKKRI). One can recognise an S1 motif domain in the interval 629–697 (GQVYEGTVLK…EKGRVRLSAK (69 aa)).

The protein belongs to the polyribonucleotide nucleotidyltransferase family. Requires Mg(2+) as cofactor.

It localises to the cytoplasm. It catalyses the reaction RNA(n+1) + phosphate = RNA(n) + a ribonucleoside 5'-diphosphate. Involved in mRNA degradation. Catalyzes the phosphorolysis of single-stranded polyribonucleotides processively in the 3'- to 5'-direction. This Paraburkholderia phytofirmans (strain DSM 17436 / LMG 22146 / PsJN) (Burkholderia phytofirmans) protein is Polyribonucleotide nucleotidyltransferase.